A 345-amino-acid polypeptide reads, in one-letter code: Holliday junction branch migration complex subunit RuvB (345 aa).

The tract at residues 1-183 is large ATPase domain (RuvB-L); that stretch reads MTTQRLVSAA…FGIVHRLEFY (183 aa). ATP-binding positions include Ile-22, Arg-23, Gly-64, Lys-67, Thr-68, Thr-69, 130–132, Arg-173, Tyr-183, and Arg-220; that span reads EDY. Mg(2+) is bound at residue Thr-68. The segment at 184–254 is small ATPAse domain (RuvB-S); that stretch reads SVEELSRIVA…VAGKALEMLD (71 aa). Residues 257 to 345 form a head domain (RuvB-H) region; that stretch reads PNGFDQSDRR…NVNEELFGDE (89 aa). DNA is bound by residues Arg-293, Arg-312, and Arg-317.

The protein belongs to the RuvB family. As to quaternary structure, homohexamer. Forms an RuvA(8)-RuvB(12)-Holliday junction (HJ) complex. HJ DNA is sandwiched between 2 RuvA tetramers; dsDNA enters through RuvA and exits via RuvB. An RuvB hexamer assembles on each DNA strand where it exits the tetramer. Each RuvB hexamer is contacted by two RuvA subunits (via domain III) on 2 adjacent RuvB subunits; this complex drives branch migration. In the full resolvosome a probable DNA-RuvA(4)-RuvB(12)-RuvC(2) complex forms which resolves the HJ.

The protein localises to the cytoplasm. It catalyses the reaction ATP + H2O = ADP + phosphate + H(+). Functionally, the RuvA-RuvB-RuvC complex processes Holliday junction (HJ) DNA during genetic recombination and DNA repair, while the RuvA-RuvB complex plays an important role in the rescue of blocked DNA replication forks via replication fork reversal (RFR). RuvA specifically binds to HJ cruciform DNA, conferring on it an open structure. The RuvB hexamer acts as an ATP-dependent pump, pulling dsDNA into and through the RuvAB complex. RuvB forms 2 homohexamers on either side of HJ DNA bound by 1 or 2 RuvA tetramers; 4 subunits per hexamer contact DNA at a time. Coordinated motions by a converter formed by DNA-disengaged RuvB subunits stimulates ATP hydrolysis and nucleotide exchange. Immobilization of the converter enables RuvB to convert the ATP-contained energy into a lever motion, pulling 2 nucleotides of DNA out of the RuvA tetramer per ATP hydrolyzed, thus driving DNA branch migration. The RuvB motors rotate together with the DNA substrate, which together with the progressing nucleotide cycle form the mechanistic basis for DNA recombination by continuous HJ branch migration. Branch migration allows RuvC to scan DNA until it finds its consensus sequence, where it cleaves and resolves cruciform DNA. This is Holliday junction branch migration complex subunit RuvB from Methylococcus capsulatus (strain ATCC 33009 / NCIMB 11132 / Bath).